Here is a 397-residue protein sequence, read N- to C-terminus: Tryptophan synthase beta chain (397 aa).

The residue at position 87 (lysine 87) is an N6-(pyridoxal phosphate)lysine.

Belongs to the TrpB family. Tetramer of two alpha and two beta chains. Pyridoxal 5'-phosphate is required as a cofactor.

The catalysed reaction is (1S,2R)-1-C-(indol-3-yl)glycerol 3-phosphate + L-serine = D-glyceraldehyde 3-phosphate + L-tryptophan + H2O. Its pathway is amino-acid biosynthesis; L-tryptophan biosynthesis; L-tryptophan from chorismate: step 5/5. Its function is as follows. The beta subunit is responsible for the synthesis of L-tryptophan from indole and L-serine. In Klebsiella pneumoniae (strain 342), this protein is Tryptophan synthase beta chain.